Consider the following 968-residue polypeptide: Glycine dehydrogenase (decarboxylating) (968 aa).

Position 712 is an N6-(pyridoxal phosphate)lysine (lysine 712).

The protein belongs to the GcvP family. In terms of assembly, the glycine cleavage system is composed of four proteins: P, T, L and H. Pyridoxal 5'-phosphate serves as cofactor.

It catalyses the reaction N(6)-[(R)-lipoyl]-L-lysyl-[glycine-cleavage complex H protein] + glycine + H(+) = N(6)-[(R)-S(8)-aminomethyldihydrolipoyl]-L-lysyl-[glycine-cleavage complex H protein] + CO2. Functionally, the glycine cleavage system catalyzes the degradation of glycine. The P protein binds the alpha-amino group of glycine through its pyridoxal phosphate cofactor; CO(2) is released and the remaining methylamine moiety is then transferred to the lipoamide cofactor of the H protein. The protein is Glycine dehydrogenase (decarboxylating) of Prochlorococcus marinus (strain NATL1A).